Here is a 241-residue protein sequence, read N- to C-terminus: Small ribosomal subunit protein uS3 (241 aa).

The KH type-2 domain maps to 39–107; it reads IRKYLEKELK…ETHLNIVEVR (69 aa). Residues 214-241 are disordered; the sequence is ASERRATEGDAAHGGGGDRERGRRRENA.

Belongs to the universal ribosomal protein uS3 family. In terms of assembly, part of the 30S ribosomal subunit. Forms a tight complex with proteins S10 and S14.

Functionally, binds the lower part of the 30S subunit head. Binds mRNA in the 70S ribosome, positioning it for translation. The sequence is that of Small ribosomal subunit protein uS3 from Mesorhizobium japonicum (strain LMG 29417 / CECT 9101 / MAFF 303099) (Mesorhizobium loti (strain MAFF 303099)).